Consider the following 257-residue polypeptide: Ribonuclease PH (257 aa).

Residues R87 and 125 to 127 (GTR) contribute to the phosphate site.

Belongs to the RNase PH family. As to quaternary structure, homohexameric ring arranged as a trimer of dimers.

The catalysed reaction is tRNA(n+1) + phosphate = tRNA(n) + a ribonucleoside 5'-diphosphate. In terms of biological role, phosphorolytic 3'-5' exoribonuclease that plays an important role in tRNA 3'-end maturation. Removes nucleotide residues following the 3'-CCA terminus of tRNAs; can also add nucleotides to the ends of RNA molecules by using nucleoside diphosphates as substrates, but this may not be physiologically important. Probably plays a role in initiation of 16S rRNA degradation (leading to ribosome degradation) during starvation. The chain is Ribonuclease PH from Geobacillus kaustophilus (strain HTA426).